Here is a 31-residue protein sequence, read N- to C-terminus: Cytochrome b6-f complex subunit 6 (31 aa).

Residues 3 to 23 (ALIGYILLMTLMFSLAAGLYF) form a helical membrane-spanning segment.

This sequence belongs to the PetL family. In terms of assembly, the 4 large subunits of the cytochrome b6-f complex are cytochrome b6, subunit IV (17 kDa polypeptide, PetD), cytochrome f and the Rieske protein, while the 4 small subunits are PetG, PetL, PetM and PetN. The complex functions as a dimer.

It is found in the plastid. The protein resides in the chloroplast thylakoid membrane. Functionally, component of the cytochrome b6-f complex, which mediates electron transfer between photosystem II (PSII) and photosystem I (PSI), cyclic electron flow around PSI, and state transitions. PetL is important for photoautotrophic growth as well as for electron transfer efficiency and stability of the cytochrome b6-f complex. The protein is Cytochrome b6-f complex subunit 6 of Emiliania huxleyi (Coccolithophore).